The sequence spans 266 residues: Succinate dehydrogenase [ubiquinone] iron-sulfur subunit, mitochondrial (266 aa).

A mitochondrion-targeting transit peptide spans 1-20; the sequence is MLNVLLRRKAFCLVTKKGMA. One can recognise a 2Fe-2S ferredoxin-type domain in the interval 36 to 127; the sequence is FKVYRWNPDE…QLKIYPLPHM (92 aa). The [2Fe-2S] cluster site is built by C87, C92, C95, and C107. Residues 169–199 form the 4Fe-4S ferredoxin-type domain; it reads DRKKLDGLYECILCACCSTSCPSYWWNQEQY. The [4Fe-4S] cluster site is built by C179, C182, and C185. C189 lines the [3Fe-4S] cluster pocket. Residue W194 participates in a ubiquinone binding. [3Fe-4S] cluster-binding residues include C236 and C242. C246 provides a ligand contact to [4Fe-4S] cluster.

It belongs to the succinate dehydrogenase/fumarate reductase iron-sulfur protein family. In terms of assembly, component of complex II composed of four subunits: a flavoprotein (FP), an iron-sulfur protein (IP), and a cytochrome b composed of a large and a small subunit. Requires [2Fe-2S] cluster as cofactor. [3Fe-4S] cluster is required as a cofactor. It depends on [4Fe-4S] cluster as a cofactor.

The protein resides in the mitochondrion inner membrane. It carries out the reaction a quinone + succinate = fumarate + a quinol. Its pathway is carbohydrate metabolism; tricarboxylic acid cycle; fumarate from succinate (eukaryal route): step 1/1. Functionally, subunit of succinate dehydrogenase (SDH) that is involved in complex II of the mitochondrial electron transport chain and is responsible for transferring electrons from succinate to ubiquinone (coenzyme Q). SDH1 and SDH2 form the catalytic dimer. Electrons flow from succinate to the FAD bound to SDH1, and sequentially through the iron-sulfur clusters bound to SDH2 and enter the membrane dimer formed by SDH3 and SDH4. In Saccharomyces cerevisiae (strain ATCC 204508 / S288c) (Baker's yeast), this protein is Succinate dehydrogenase [ubiquinone] iron-sulfur subunit, mitochondrial (SDH2).